An 820-amino-acid polypeptide reads, in one-letter code: Potassium channel GORK (820 aa).

Topologically, residues 1-69 (MGRLRRRQEI…PKNRWYKAWE (69 aa)) are cytoplasmic. The chain crosses the membrane as a helical span at residues 70-90 (MFILVWAIYSSLFTPMEFGFF). Residues 91–97 (RGLPERL) are Extracellular-facing. Residues 98 to 118 (FVLDIVGQIAFLVDIVLQFFV) traverse the membrane as a helical segment. Topologically, residues 119–141 (AYRDTQTYRTVYKPTRIAFRYLK) are cytoplasmic. A helical transmembrane segment spans residues 142–162 (SHFLMDFIGCFPWDLIYKASG). The Extracellular segment spans residues 163–168 (KHELVR). A helical; Voltage-sensor transmembrane segment spans residues 169-189 (YLLWIRLFRVRKVVEFFQRLE). The Cytoplasmic portion of the chain corresponds to 190–203 (KDTRINYLFTRILK). A helical membrane pass occupies residues 204-224 (LLFVEVYCTHTAACIFYYLAT). At 225–259 (TLPPENEGYTWIGSLKLGDYSYENFREIDLWKRYT) the chain is on the extracellular side. An intramembrane region (pore-forming) is located at residues 260-279 (TALYFAIVTMATVGYGDIHA). The Extracellular portion of the chain corresponds to 280–285 (VNLREM). A helical transmembrane segment spans residues 286–306 (IFVMIYVSFDMVLGAYLIGNI). At 307 to 820 (TALIVKGSNT…YMISDTTDQT (514 aa)) the chain is on the cytoplasmic side. Residue 386 to 508 (LFKGCSTEFI…ILNNIMEEKE (123 aa)) coordinates a nucleoside 3',5'-cyclic phosphate. 6 ANK repeats span residues 528–559 (EAEL…DPNK), 563–592 (DGRS…DVNL), 596–625 (FGHT…SFNL), 627–656 (DSGN…NPNS), 660–689 (DHRT…SVIS), and 693–722 (WGNS…AQSS). Residues 740 to 820 (KCTVFPFHPQ…YMISDTTDQT (81 aa)) enclose the KHA domain.

Belongs to the potassium channel family. Plant (TC 1.A.1.4) subfamily. In terms of assembly, the potassium channel is probably composed of a homo- or heterotetrameric complex of pore-forming subunits. Expressed in guard cell-containing tissues, in root epidermal cells and in root hairs. Detected in vascular cells of the root and shoot.

It localises to the membrane. Major selective outward-rectifying potassium channel of the guard cell membrane. Involved in regulation of stomatal movements according to the water status. Assuming opened or closed conformations in response to the voltage difference across the membrane, the channel is activated by depolarization. Conductance of the channel is modulated in a potassium-dependent fashion. May interact with the cytoskeleton or with regulatory proteins. In Arabidopsis thaliana (Mouse-ear cress), this protein is Potassium channel GORK (GORK).